The chain runs to 124 residues: Fluoride-specific ion channel FluC (124 aa).

4 consecutive transmembrane segments (helical) span residues 3 to 23, 34 to 54, 66 to 86, and 100 to 120; these read IIAIAVGAAIGANLRYSLSIW, YGTLIVNVIGSFAIGFVLVLA, LLIVTGLLGGFTTFSSLSFET, and LYVLSSFGLGIAGVFLGAGVA. Residues Gly74 and Thr77 each contribute to the Na(+) site.

The protein belongs to the fluoride channel Fluc/FEX (TC 1.A.43) family.

It is found in the cell membrane. It catalyses the reaction fluoride(in) = fluoride(out). Na(+) is not transported, but it plays an essential structural role and its presence is essential for fluoride channel function. Fluoride-specific ion channel. Important for reducing fluoride concentration in the cell, thus reducing its toxicity. In Roseiflexus sp. (strain RS-1), this protein is Fluoride-specific ion channel FluC.